We begin with the raw amino-acid sequence, 130 residues long: Large ribosomal subunit protein bL12c (130 aa).

It belongs to the bacterial ribosomal protein bL12 family. Homodimer. Part of the ribosomal stalk of the 50S ribosomal subunit. Forms a multimeric L10(L12)X complex, where L10 forms an elongated spine to which 2 to 4 L12 dimers bind in a sequential fashion. Binds GTP-bound translation factors.

It localises to the plastid. In terms of biological role, forms part of the ribosomal stalk which helps the ribosome interact with GTP-bound translation factors. Is thus essential for accurate translation. The polypeptide is Large ribosomal subunit protein bL12c (Prototheca wickerhamii).